A 525-amino-acid chain; its full sequence is Serine/threonine-protein kinase YPK3 (525 aa).

S90 and S105 each carry phosphoserine. T107 bears the Phosphothreonine mark. Positions 128 to 424 constitute a Protein kinase domain; sequence FKPVRVLGQG…KTGANNKPTK (297 aa). ATP-binding positions include 134–142 and K157; that span reads LGQGAYGKV. Residues 170–193 are disordered; it reads ATDSKREDEDKNDGNNNDNDDGLS. A compositionally biased stretch (basic and acidic residues) spans 172–182; it reads DSKREDEDKND. D277 functions as the Proton acceptor in the catalytic mechanism. S321 is modified (phosphoserine; by PKH1 or PKH2). Positions 445-524 constitute an AGC-kinase C-terminal domain; sequence RKIDWKLLES…KASGSYLEKY (80 aa). Position 490 is a phosphothreonine; by TORC1 (T490). Position 513 is a phosphoserine; by TORC1 (S513).

Belongs to the protein kinase superfamily. AGC Ser/Thr protein kinase family. S6 kinase subfamily. Phosphorylated by PKA in a TORC1-dependent manner. Phosphorylation at PKA consensus sites RRxS/T decreases upon rapamycin treatment.

It localises to the cytoplasm. It carries out the reaction L-seryl-[protein] + ATP = O-phospho-L-seryl-[protein] + ADP + H(+). The enzyme catalyses L-threonyl-[protein] + ATP = O-phospho-L-threonyl-[protein] + ADP + H(+). Its function is as follows. AGC kinase which plays a role in TOR complex 1 (TORC1) signaling pathway which mediates temporal control of cell growth in response to nutrients. Required for phosphorylation of ribosomal protein S6 (RPS6A/RPS6B) at 'Ser-232' and 'Ser-233'. The polypeptide is Serine/threonine-protein kinase YPK3 (Saccharomyces cerevisiae (strain ATCC 204508 / S288c) (Baker's yeast)).